The primary structure comprises 285 residues: 1,4-dihydroxy-2-naphthoyl-CoA synthase (285 aa).

Substrate contacts are provided by residues Arg-45, 84-89 (SGGDQK), Tyr-97, 129-133 (YSIGG), Thr-155, Ser-161, Tyr-258, and Lys-273. 154–156 (QTG) contributes to the hydrogencarbonate binding site.

Belongs to the enoyl-CoA hydratase/isomerase family. MenB subfamily. As to quaternary structure, homohexamer. Dimer of a homotrimer. Requires hydrogencarbonate as cofactor.

The enzyme catalyses 2-succinylbenzoyl-CoA + H(+) = 1,4-dihydroxy-2-naphthoyl-CoA + H2O. It functions in the pathway quinol/quinone metabolism; 1,4-dihydroxy-2-naphthoate biosynthesis; 1,4-dihydroxy-2-naphthoate from chorismate: step 6/7. Its pathway is quinol/quinone metabolism; menaquinone biosynthesis. Its activity is regulated as follows. Inhibited by sulfite and nitrate. In terms of biological role, converts o-succinylbenzoyl-CoA (OSB-CoA) to 1,4-dihydroxy-2-naphthoyl-CoA (DHNA-CoA). The sequence is that of 1,4-dihydroxy-2-naphthoyl-CoA synthase from Escherichia coli (strain K12).